Reading from the N-terminus, the 201-residue chain is Alpha-1-acid glycoprotein 2 (201 aa).

Positions 1 to 18 (MALSWVLTVLSLLPLLEA) are cleaved as a signal peptide. Gln-19 carries the pyrrolidone carboxylic acid modification. 2 disulfide bridges follow: Cys-23–Cys-165 and Cys-90–Cys-183. An N-linked (GlcNAc...) (complex) asparagine glycan is attached at Asn-33. Residues Asn-56, Asn-72, Asn-93, and Asn-103 are each glycosylated (N-linked (GlcNAc...) asparagine).

The protein belongs to the calycin superfamily. Lipocalin family. Post-translationally, N-glycosylated. N-glycan heterogeneity at Asn-33: Hex5HexNAc4 (minor), Hex6HexNAc5 (major) and dHex1Hex6HexNAc5 (minor). Expressed by the liver and secreted in plasma.

Its subcellular location is the secreted. Functionally, functions as a transport protein in the blood stream. Binds various hydrophobic ligands in the interior of its beta-barrel domain. Also binds synthetic drugs and influences their distribution and availability. Appears to function in modulating the activity of the immune system during the acute-phase reaction. This is Alpha-1-acid glycoprotein 2 (ORM2) from Homo sapiens (Human).